The chain runs to 310 residues: tRNA dimethylallyltransferase (310 aa).

14–21 is a binding site for ATP; sequence GPTASGKS. 16–21 contacts substrate; it reads TASGKS. Interaction with substrate tRNA regions lie at residues 39–42 and 163–167; these read DSMQ and QRIVR.

The protein belongs to the IPP transferase family. Monomer. Requires Mg(2+) as cofactor.

The enzyme catalyses adenosine(37) in tRNA + dimethylallyl diphosphate = N(6)-dimethylallyladenosine(37) in tRNA + diphosphate. Its function is as follows. Catalyzes the transfer of a dimethylallyl group onto the adenine at position 37 in tRNAs that read codons beginning with uridine, leading to the formation of N6-(dimethylallyl)adenosine (i(6)A). This is tRNA dimethylallyltransferase from Brucella ovis (strain ATCC 25840 / 63/290 / NCTC 10512).